We begin with the raw amino-acid sequence, 283 residues long: Pantothenate synthetase (283 aa).

M30–H37 provides a ligand contact to ATP. Catalysis depends on H37, which acts as the Proton donor. Q61 serves as a coordination point for (R)-pantoate. Q61 contacts beta-alanine. Residue G149–D152 participates in ATP binding. Q155 provides a ligand contact to (R)-pantoate. ATP is bound at residue L186–R189.

The protein belongs to the pantothenate synthetase family. Homodimer.

It is found in the cytoplasm. It carries out the reaction (R)-pantoate + beta-alanine + ATP = (R)-pantothenate + AMP + diphosphate + H(+). It functions in the pathway cofactor biosynthesis; (R)-pantothenate biosynthesis; (R)-pantothenate from (R)-pantoate and beta-alanine: step 1/1. In terms of biological role, catalyzes the condensation of pantoate with beta-alanine in an ATP-dependent reaction via a pantoyl-adenylate intermediate. In Escherichia coli O127:H6 (strain E2348/69 / EPEC), this protein is Pantothenate synthetase.